The chain runs to 800 residues: Transducin beta-like protein 3 (800 aa).

An N-acetylalanine modification is found at Ala2. WD repeat units follow at residues 64–105 (EDQE…RLWK), 107–146 (IHTAPVATMAFDPTSTLLATGGCDGAVRVWDVVRCYGTHH), 149–190 (GSPG…CLAV), 193–232 (AHYSAVTSLTFSADGHTMLSSGRDKICVIWDLRSLQATRT), 245–284 (LPEEPAPELGVKSAGLHFLTAGDQGALRVWEAASGRCVHA), 290–329 (GPGRELTHCTLAHAAGLLLSVTADHNLLLYDARSLRLRKQ), 332–372 (GYSE…CQIL), 374–413 (GHTDIVLALDVFRKGRLFASCAKDQSIRVWRMNKSGEVAC), 419–459 (GHTH…LSKG), 477–516 (CHDKDINSVAVAPNDKLLATGSQDRTAKLWALPRCQLLGT), 519–560 (GHRR…KTFE), 562–602 (HDAS…RTLD), and 604–642 (HEDKVWGLHCSRLDDRALTGASDSRVVLWKDVTEAEQAE). The residue at position 257 (Ser257) is a Phosphoserine. A Glycyl lysine isopeptide (Lys-Gly) (interchain with G-Cter in SUMO2) cross-link involves residue Lys407.

As to quaternary structure, part of the small subunit (SSU) processome, composed of more than 70 proteins and the RNA chaperone small nucleolar RNA (snoRNA) U3.

The protein localises to the nucleus. Its subcellular location is the nucleolus. Its function is as follows. Part of the small subunit (SSU) processome, first precursor of the small eukaryotic ribosomal subunit. During the assembly of the SSU processome in the nucleolus, many ribosome biogenesis factors, an RNA chaperone and ribosomal proteins associate with the nascent pre-rRNA and work in concert to generate RNA folding, modifications, rearrangements and cleavage as well as targeted degradation of pre-ribosomal RNA by the RNA exosome. The polypeptide is Transducin beta-like protein 3 (TBL3) (Bos taurus (Bovine)).